The sequence spans 497 residues: Guanosine-5'-triphosphate,3'-diphosphate pyrophosphatase (497 aa).

Belongs to the GppA/Ppx family. GppA subfamily.

The enzyme catalyses guanosine 3'-diphosphate 5'-triphosphate + H2O = guanosine 3',5'-bis(diphosphate) + phosphate + H(+). Its pathway is purine metabolism; ppGpp biosynthesis; ppGpp from GTP: step 2/2. Its function is as follows. Catalyzes the conversion of pppGpp to ppGpp. Guanosine pentaphosphate (pppGpp) is a cytoplasmic signaling molecule which together with ppGpp controls the 'stringent response', an adaptive process that allows bacteria to respond to amino acid starvation, resulting in the coordinated regulation of numerous cellular activities. The sequence is that of Guanosine-5'-triphosphate,3'-diphosphate pyrophosphatase from Vibrio campbellii (strain ATCC BAA-1116).